The sequence spans 702 residues: Polyribonucleotide nucleotidyltransferase (702 aa).

Residues D487 and D493 each coordinate Mg(2+). Residues 554 to 613 (PRLLTIKIHPDKIREVIGKGGSTIQAITKETGTQIDIQDDGTIVIASVNAIAAQAAKARI) form the KH domain. One can recognise an S1 motif domain in the interval 623 to 691 (GRIYEGKVAK…KQGRIRLSMK (69 aa)).

It belongs to the polyribonucleotide nucleotidyltransferase family. Component of the RNA degradosome, which is a multiprotein complex involved in RNA processing and mRNA degradation. Mg(2+) is required as a cofactor.

Its subcellular location is the cytoplasm. It carries out the reaction RNA(n+1) + phosphate = RNA(n) + a ribonucleoside 5'-diphosphate. In terms of biological role, involved in mRNA degradation. Catalyzes the phosphorolysis of single-stranded polyribonucleotides processively in the 3'- to 5'-direction. This chain is Polyribonucleotide nucleotidyltransferase, found in Stenotrophomonas maltophilia (strain K279a).